We begin with the raw amino-acid sequence, 134 residues long: Nif-regulating protein A (134 aa).

A C4-type; atypical zinc finger spans residues 3 to 36; that stretch reads CLECGLVYIVSGLKVPEKISVRVFVNRIEHPFTH.

Interacts with the general archaeal transcription factors TBPs.

Its function is as follows. Involved in nitrogen regulation. Enhances the transcription of the nitrogen fixation (nif) operon under nitrogen-limited conditions. Acts by binding to the nifH promoter region. This chain is Nif-regulating protein A, found in Methanosarcina mazei (strain ATCC BAA-159 / DSM 3647 / Goe1 / Go1 / JCM 11833 / OCM 88) (Methanosarcina frisia).